We begin with the raw amino-acid sequence, 279 residues long: Thymidylate synthase (279 aa).

133–134 lines the dUMP pocket; the sequence is RR. The active-site Nucleophile is C154. Residues 178–181, N189, and 219–221 contribute to the dUMP site; these read RSND and HIY. Residue D181 participates in (6R)-5,10-methylene-5,6,7,8-tetrahydrofolate binding. A (6R)-5,10-methylene-5,6,7,8-tetrahydrofolate-binding site is contributed by A278.

The protein belongs to the thymidylate synthase family. Bacterial-type ThyA subfamily. Homodimer.

Its subcellular location is the cytoplasm. It carries out the reaction dUMP + (6R)-5,10-methylene-5,6,7,8-tetrahydrofolate = 7,8-dihydrofolate + dTMP. The protein operates within pyrimidine metabolism; dTTP biosynthesis. Functionally, catalyzes the reductive methylation of 2'-deoxyuridine-5'-monophosphate (dUMP) to 2'-deoxythymidine-5'-monophosphate (dTMP) while utilizing 5,10-methylenetetrahydrofolate (mTHF) as the methyl donor and reductant in the reaction, yielding dihydrofolate (DHF) as a by-product. This enzymatic reaction provides an intracellular de novo source of dTMP, an essential precursor for DNA biosynthesis. The sequence is that of Thymidylate synthase from Streptococcus pyogenes serotype M12 (strain MGAS2096).